Here is a 354-residue protein sequence, read N- to C-terminus: Uroporphyrinogen decarboxylase (354 aa).

Substrate contacts are provided by residues 30–34 (RQAGR), Asp-79, Tyr-154, Ser-209, and His-333.

It belongs to the uroporphyrinogen decarboxylase family. Homodimer.

It localises to the cytoplasm. It carries out the reaction uroporphyrinogen III + 4 H(+) = coproporphyrinogen III + 4 CO2. It participates in porphyrin-containing compound metabolism; protoporphyrin-IX biosynthesis; coproporphyrinogen-III from 5-aminolevulinate: step 4/4. Functionally, catalyzes the decarboxylation of four acetate groups of uroporphyrinogen-III to yield coproporphyrinogen-III. The chain is Uroporphyrinogen decarboxylase from Mycobacterium sp. (strain JLS).